A 342-amino-acid chain; its full sequence is Probable long-chain-alcohol O-fatty-acyltransferase 3 (342 aa).

The next 8 helical transmembrane spans lie at I9 to I29, L36 to V56, F58 to S78, I115 to E135, I153 to G173, M227 to F247, T255 to V275, and V297 to I317.

It belongs to the wax synthase family.

The protein resides in the membrane. The catalysed reaction is a long chain fatty alcohol + a fatty acyl-CoA = a wax ester + CoA. In terms of biological role, catalyzes the final step in the synthesis of long-chain linear esters (waxes). This is Probable long-chain-alcohol O-fatty-acyltransferase 3 (AT3) from Arabidopsis thaliana (Mouse-ear cress).